The sequence spans 78 residues: Small ribosomal subunit protein uS17 (78 aa).

The protein belongs to the universal ribosomal protein uS17 family. Part of the 30S ribosomal subunit.

Functionally, one of the primary rRNA binding proteins, it binds specifically to the 5'-end of 16S ribosomal RNA. This is Small ribosomal subunit protein uS17 from Allorhizobium ampelinum (strain ATCC BAA-846 / DSM 112012 / S4) (Agrobacterium vitis (strain S4)).